The sequence spans 481 residues: Aromatic amino acid aminotransferase DDB_G0272014 (481 aa).

Position 300 is an N6-(pyridoxal phosphate)lysine (lysine 300).

This sequence belongs to the class-I pyridoxal-phosphate-dependent aminotransferase family. The cofactor is pyridoxal 5'-phosphate.

The protein resides in the cytoplasm. The enzyme catalyses an aromatic L-alpha-amino acid + 2-oxoglutarate = an aromatic oxo-acid + L-glutamate. In terms of biological role, has aromatic amino acid transaminase activity. The protein is Aromatic amino acid aminotransferase DDB_G0272014 of Dictyostelium discoideum (Social amoeba).